The sequence spans 501 residues: uncharacterized protein (501 aa).

It belongs to the UbiD family.

This is an uncharacterized protein from Synechocystis sp. (strain ATCC 27184 / PCC 6803 / Kazusa).